The chain runs to 326 residues: G-protein coupled receptor 171 (326 aa).

Topologically, residues 1-19 are extracellular; that stretch reads MTNSSMFCPIYRDLEPFTY. Residues 20-40 traverse the membrane as a helical segment; that stretch reads FFYLVYLIGIIGSCFATWAFI. The Cytoplasmic portion of the chain corresponds to 41–48; that stretch reads QKSTNHRC. The helical transmembrane segment at 49 to 69 threads the bilayer; that stretch reads VSIYLINLLTADFLLTLALPV. Residues 70-89 are Extracellular-facing; it reads KIVVDLGVAPWKLRIFHCQV. The cysteines at positions 87 and 165 are disulfide-linked. Residues 90 to 110 form a helical membrane-spanning segment; the sequence is TACLIYINMYLSIIFLAFVSI. Residues 111–133 are Cytoplasmic-facing; that stretch reads DRCLQLVHSCKIYRIQEPGFAKM. Residues 134–154 form a helical membrane-spanning segment; the sequence is ISAVVWLMVLLIMVPNMVIPI. Topologically, residues 155–182 are extracellular; it reads KNIKEKSNVGCMEFKREFGKNWHLLTNF. The helical transmembrane segment at 183 to 203 threads the bilayer; the sequence is ICVAIFLNFSAIILISNFLVI. Over 204–221 the chain is Cytoplasmic; it reads RQLYRNRDNANYPSVKSA. The chain crosses the membrane as a helical span at residues 222 to 242; sequence LLNILLVTASYIICFVPYHAV. Residues 243 to 268 lie on the Extracellular side of the membrane; sequence RIPYTLSQTEVISDCSTRIALFKAKE. Residues 269 to 289 traverse the membrane as a helical segment; the sequence is ATLLLAVSNLCFDPILYYHLS. The Cytoplasmic portion of the chain corresponds to 290-326; the sequence is KAFRLKVTETFASPQKMKAREEKPRRENDVQSTGSAC. The disordered stretch occupies residues 305–326; the sequence is KMKAREEKPRRENDVQSTGSAC. Over residues 307-318 the composition is skewed to basic and acidic residues; that stretch reads KAREEKPRREND.

The protein belongs to the G-protein coupled receptor 1 family.

The protein localises to the cell membrane. In terms of biological role, G-protein coupled receptor for Big LEN, a 16-amino acid neuropeptide produced from the precursor protein, proSAAS (encoded by PCSK1N). Acts through a G(i)-alpha-mediated pathway in response to Big LEN. Big LEN-GPR171 system plays an important role in regulating feeding and metabolism. Also plays a role in modulating fear and anxiety-like behaviors in the basolateral amygdala. Big LEN-GPR171 modulates the mu-type opioid receptor signaling and antinociception. Acts as a negative regulator T cell function. The polypeptide is G-protein coupled receptor 171 (Rattus norvegicus (Rat)).